The sequence spans 581 residues: Phosphoinositide phospholipase C 2 (581 aa).

The 77-residue stretch at 26 to 102 (EIKTIFEKYS…NPPLALHKVH (77 aa)) folds into the EF-hand-like domain. The PI-PLC X-box domain maps to 103-248 (HDMDAPISHY…LKRRIIISTK (146 aa)). Residues H118 and H164 contribute to the active site. The segment at 279–314 (PSFIQRNKSEAKDDLDGNDDDDDDDDEDKSKINAPP) is disordered. A compositionally biased stretch (acidic residues) spans 294–305 (DGNDDDDDDDDE). Residues 317–433 (KHLIAIHAGK…GYIKKPDLLL (117 aa)) form the PI-PLC Y-box domain. The C2 domain maps to 434 to 563 (KSGSDSDIFD…EGIRAFPLHS (130 aa)).

It depends on Ca(2+) as a cofactor. In terms of processing, phosphorylation level varies significantly during early response to bacterial elicitor. As to expression, expressed in roots, shoots, leaves and flowers.

Its subcellular location is the cell membrane. The catalysed reaction is a 1,2-diacyl-sn-glycero-3-phospho-(1D-myo-inositol-4,5-bisphosphate) + H2O = 1D-myo-inositol 1,4,5-trisphosphate + a 1,2-diacyl-sn-glycerol + H(+). Functionally, the production of the second messenger molecules diacylglycerol (DAG) and inositol 1,4,5-trisphosphate (IP3) is mediated by activated phosphatidylinositol-specific phospholipase C enzymes. At physiological calcium concentration, the preferred substrate is phosphatidylinositol 4,5-bisphosphate versus phosphatidylinositol. This Arabidopsis thaliana (Mouse-ear cress) protein is Phosphoinositide phospholipase C 2 (PLC2).